A 511-amino-acid chain; its full sequence is Maturase K (511 aa).

The protein belongs to the intron maturase 2 family. MatK subfamily.

The protein localises to the plastid. It is found in the chloroplast. Its function is as follows. Usually encoded in the trnK tRNA gene intron. Probably assists in splicing its own and other chloroplast group II introns. The polypeptide is Maturase K (Chloranthus spicatus (Chulantree)).